The sequence spans 107 residues: MFSTSDQVSKMNSRILSALLILGIATCVIAGGFCPKSRHPQCNLSYKINDCCAQSDCRVGSVCCVEGCGNVCRAESDTPLGEKFVDGSECKHGHVFPKKWYQFWWRV.

The N-terminal stretch at 1-30 (MFSTSDQVSKMNSRILSALLILGIATCVIA) is a signal peptide. One can recognise a WAP domain in the interval 31–76 (GGFCPKSRHPQCNLSYKINDCCAQSDCRVGSVCCVEGCGNVCRAES). Cystine bridges form between C34–C64, C42–C68, C51–C63, C52–C90, and C57–C72.

It belongs to the venom protein 11 family. 02 (wap-2) subfamily. In terms of processing, contains 5 disulfide bonds. Expressed by the venom gland.

It is found in the secreted. In terms of biological role, has antibacterial activity. This is U20-lycotoxin-Ls1b from Lycosa singoriensis (Wolf spider).